The primary structure comprises 215 residues: MSNNSRHYSAIDEAILQGQAMLETLFGKPVAQRENPAKGLSQPALTSAEKKQSIGFMRVNHSGEVCAQALYHGQMATAKNPAVRALFTTAAKEETDHLAWCQERLEELGGHTSYLNAFWYTNSFLIGLLAGLSGDPLSLGFVEETEKQVEIHLADHLRKIPSSDLKSRKIVEYMQQDEIQHGLNARSSGAKELPYLVKKLMAFHAKVMTTLAYWI.

Glu64, Glu94, His97, Glu146, Glu178, and His181 together coordinate Fe cation.

It belongs to the COQ7 family. It depends on Fe cation as a cofactor.

It is found in the cell membrane. It carries out the reaction a 5-methoxy-2-methyl-3-(all-trans-polyprenyl)benzene-1,4-diol + AH2 + O2 = a 3-demethylubiquinol + A + H2O. Its pathway is cofactor biosynthesis; ubiquinone biosynthesis. Catalyzes the hydroxylation of 2-nonaprenyl-3-methyl-6-methoxy-1,4-benzoquinol during ubiquinone biosynthesis. This chain is 3-demethoxyubiquinol 3-hydroxylase, found in Coxiella burnetii (strain Dugway 5J108-111).